Reading from the N-terminus, the 95-residue chain is Aspartyl/glutamyl-tRNA(Asn/Gln) amidotransferase subunit C (95 aa).

Belongs to the GatC family. As to quaternary structure, heterotrimer of A, B and C subunits.

It catalyses the reaction L-glutamyl-tRNA(Gln) + L-glutamine + ATP + H2O = L-glutaminyl-tRNA(Gln) + L-glutamate + ADP + phosphate + H(+). The catalysed reaction is L-aspartyl-tRNA(Asn) + L-glutamine + ATP + H2O = L-asparaginyl-tRNA(Asn) + L-glutamate + ADP + phosphate + 2 H(+). Its function is as follows. Allows the formation of correctly charged Asn-tRNA(Asn) or Gln-tRNA(Gln) through the transamidation of misacylated Asp-tRNA(Asn) or Glu-tRNA(Gln) in organisms which lack either or both of asparaginyl-tRNA or glutaminyl-tRNA synthetases. The reaction takes place in the presence of glutamine and ATP through an activated phospho-Asp-tRNA(Asn) or phospho-Glu-tRNA(Gln). This chain is Aspartyl/glutamyl-tRNA(Asn/Gln) amidotransferase subunit C, found in Methylobacterium sp. (strain 4-46).